The sequence spans 329 residues: Mas-related G-protein coupled receptor member X2 (329 aa).

Residues 1-33 (MDPTTPAWGTESTTMNGNDQALPLLCGKETMIS) are Extracellular-facing. A helical membrane pass occupies residues 34–54 (VFLILFIALVGLVGNAFVLWL). Topologically, residues 55 to 63 (LGFRMRRNA) are cytoplasmic. A helical transmembrane segment spans residues 64–84 (FSVYVLSLAGADFLFLCFQMT). The Extracellular portion of the chain corresponds to 85–96 (SCLAYLINFFGS). A helical transmembrane segment spans residues 97–116 (ISINIPSFFTVMTCAYLAGL). The Cytoplasmic portion of the chain corresponds to 117–143 (SMLSAISTERCLSVLWPIWYRCRRPRH). The chain crosses the membrane as a helical span at residues 144 to 164 (LSAVMCVLLWALSLLLSILEG). Over 165 to 183 (KFCGFLFSDDDPGWCQTFD) the chain is Extracellular. A helical transmembrane segment spans residues 184-204 (FITAAWLMFLFVVLCGSSLAL). The Cytoplasmic portion of the chain corresponds to 205–227 (LVRILCGSRSLPLTRLYLTILLT). Residues 228-248 (VLIFLLCGLPFGIQWFLILWI) traverse the membrane as a helical segment. Over 249 to 263 (WKNSVVLFCHIHPIS) the chain is Extracellular. A helical membrane pass occupies residues 264–284 (VVLSSFNSSANPIIYFFVGSF). At 285–329 (RKQWRLRQPILKLALQRALQDTAEVDHSEGCFSQGTLEMSRSSLV) the chain is on the cytoplasmic side.

This sequence belongs to the G-protein coupled receptor 1 family. Mas subfamily.

The protein resides in the cell membrane. Its function is as follows. Mast cell-specific receptor for basic secretagogues, i.e. cationic amphiphilic drugs, as well as endo- or exogenous peptides, consisting of a basic head group and a hydrophobic core. Recognizes and binds small molecules containing a cyclized tetrahydroisoquinoline (THIQ), such as non-steroidal neuromuscular blocking drugs (NMBDs), including tubocurarine and atracurium. In response to these compounds, mediates pseudo-allergic reactions characterized by histamine release, inflammation and airway contraction. This Macaca mulatta (Rhesus macaque) protein is Mas-related G-protein coupled receptor member X2 (MRGPRX2).